The following is a 952-amino-acid chain: Calsyntenin-1 (952 aa).

The signal sequence occupies residues 1-28 (MLRRPAPALARAVRLLLAGLLYGGGVWA). Residues 29 to 830 (ARVNKHKPWL…PHPFAVVPST (802 aa)) are Extracellular-facing. 2 Cadherin domains span residues 38–154 (LEPT…APVF) and 155–255 (KEKS…SPGW). N-linked (GlcNAc...) asparagine glycosylation is present at Asn356. Residues 831–851 (ATVVIVVCVSFLVFMIILGVF) traverse the membrane as a helical segment. Topologically, residues 852–952 (RIRAAHQRTM…LEWDYSTLSY (101 aa)) are cytoplasmic. Positions 886-952 (METYEDQHSS…LEWDYSTLSY (67 aa)) are disordered. Over residues 896–930 (EEEEEEEEEEESEDGEEEEDITSAESESSEEEEGG) the composition is skewed to acidic residues. A compositionally biased stretch (polar residues) spans 934–952 (GQNTTRQQQLEWDYSTLSY).

This sequence belongs to the calsyntenin family. Directly interacts with APBA2. Forms a tripartite complex with APBA2 and APP. Interacts with KLC1. As to quaternary structure, interacts with APBB1; this interaction stabilizes AlcICD metabolism. In terms of assembly, interacts with PSEN1. Post-translationally, proteolytically processed under normal cellular conditions. A primary zeta-cleavage generates a large extracellular (soluble) N-terminal domain (sAlc) and a short C-terminal transmembrane fragment (CTF1). A secondary cleavage catalyzed by presenilin gamma-secretase within the transmembrane domain releases the beta-Alc-alpha chain in the extracellular milieu and produces an intracellular fragment (AlcICD). This processing is strongly suppressed in the tripartite complex formed with APBA2 and APP, which seems to prevent the association with PSEN1. In terms of tissue distribution, preferentially expressed in the retina and brain.

The protein resides in the postsynaptic cell membrane. It localises to the endoplasmic reticulum membrane. The protein localises to the golgi apparatus membrane. It is found in the cell projection. Its subcellular location is the neuron projection. The protein resides in the nucleus. Functionally, postsynaptic adhesion molecule that binds to presynaptic neurexins to mediate both excitatory and inhibitory synapse formation. Promotes synapse development by acting as a cell adhesion molecule at the postsynaptic membrane, which associates with neurexin-alpha at the presynaptic membrane. Also functions as a cargo in axonal anterograde transport by acting as a molecular adapter that promotes KLC1 association with vesicles. Complex formation with APBA2 and APP, stabilizes APP metabolism and enhances APBA2-mediated suppression of beta-APP40 secretion, due to the retardation of intracellular APP maturation. In terms of biological role, as intracellular fragment AlcICD, suppresses APBB1-dependent transactivation stimulated by APP C-terminal intracellular fragment (AICD), most probably by competing with AICD for APBB1-binding. In complex with APBA2 and C99, a C-terminal APP fragment, abolishes C99 interaction with PSEN1 and thus APP C99 cleavage by gamma-secretase, most probably through stabilization of the direct interaction between APBA2 and APP. The sequence is that of Calsyntenin-1 (Clstn1) from Rattus norvegicus (Rat).